The primary structure comprises 112 residues: Large ribosomal subunit protein eL30 (112 aa).

It belongs to the eukaryotic ribosomal protein eL30 family.

The polypeptide is Large ribosomal subunit protein eL30 (RPL30) (Zea mays (Maize)).